A 476-amino-acid polypeptide reads, in one-letter code: Probable serine carboxypeptidase CPVL (476 aa).

An N-terminal signal peptide occupies residues 1 to 22 (MVGTMWKVIVSLVLLMPGSCDG). Residues N81 and N132 are each glycosylated (N-linked (GlcNAc...) asparagine). The active site involves S204. Residues N307 and N346 are each glycosylated (N-linked (GlcNAc...) asparagine). Catalysis depends on residues D388 and H448.

Belongs to the peptidase S10 family.

May be involved in the digestion of phagocytosed particles in the lysosome, participation in an inflammatory protease cascade, and trimming of peptides for antigen presentation. The chain is Probable serine carboxypeptidase CPVL (CPVL) from Pongo abelii (Sumatran orangutan).